We begin with the raw amino-acid sequence, 149 residues long: Squidulin (149 aa).

An N-acetylalanine modification is found at A1. EF-hand domains lie at 7–42, 43–78, 80–115, and 117–149; these read KQIA…LGRT, PSDA…QMGP, DPEK…FSDE, and LTSE…MTPK. Residues D20, D22, D24, Q26, E31, D56, D58, N60, T62, E67, D93, D95, N97, E104, D130, D132, D134, M136, and E141 each coordinate Ca(2+).

This sequence belongs to the calmodulin family.

Its function is as follows. Not known. This protein has four functional calcium-binding sites. In Doryteuthis pealeii (Longfin inshore squid), this protein is Squidulin.